Here is a 470-residue protein sequence, read N- to C-terminus: AAA-ATPase At5g17730 (470 aa).

Residues Met1–Ala18 form the signal peptide. Residue Gly252–Thr259 participates in ATP binding.

Belongs to the AAA ATPase family. BCS1 subfamily. Mg(2+) is required as a cofactor.

It catalyses the reaction ATP + H2O = ADP + phosphate + H(+). The protein is AAA-ATPase At5g17730 of Arabidopsis thaliana (Mouse-ear cress).